A 251-amino-acid chain; its full sequence is ATP synthase subunit a, chloroplastic (251 aa).

Transmembrane regions (helical) follow at residues 3-23 (IVLLYYFVNMFISGIFQIANV), 38-58 (IHGQVLINSWIVILIIGFLSI), 99-119 (VPYIGTMFLFIFVSNWSGALI), 138-158 (INTTAGLAILTSLAYFYAGLN), 203-223 (LVVAVLVSLVPLIVPVPLIFL), and 224-244 (GLFTSGIQALIFATLSGSYIG).

Belongs to the ATPase A chain family. As to quaternary structure, F-type ATPases have 2 components, CF(1) - the catalytic core - and CF(0) - the membrane proton channel. CF(1) has five subunits: alpha(3), beta(3), gamma(1), delta(1), epsilon(1). CF(0) has four main subunits: a, b, b' and c.

The protein localises to the plastid. It is found in the chloroplast thylakoid membrane. Key component of the proton channel; it plays a direct role in the translocation of protons across the membrane. The protein is ATP synthase subunit a, chloroplastic of Euglena gracilis.